Consider the following 229-residue polypeptide: UPF0758 protein Mbar_A2303 (229 aa).

The 123-residue stretch at 106 to 228 (KVCSPKDVYT…YVSLKDEGFV (123 aa)) folds into the MPN domain. Histidine 177, histidine 179, and aspartate 190 together coordinate Zn(2+). Residues 177-190 (HNHPSGDPSPSRED) carry the JAMM motif motif.

The protein belongs to the UPF0758 family.

In Methanosarcina barkeri (strain Fusaro / DSM 804), this protein is UPF0758 protein Mbar_A2303.